Here is a 531-residue protein sequence, read N- to C-terminus: Transporter mfs1 (531 aa).

10 consecutive transmembrane segments (helical) span residues 83-103 (LVVTFDVCFLTFAVYMGSAIF), 119-139 (VPVILGLTLFVEGYAVGPLIF), 158-178 (LIVFICLQIPTALGSSLGVLL), 182-202 (FLAGVFGSPALSTGGASLADI), 214-234 (FWSLGAVGGPVLGPLLGAAMV), 241-261 (WQFWLLMMISALVLVIITFFM), 325-345 (IYIGLVYSILYLWFEAFPILF), 358-378 (LVYMGILVGSVLTVAFYFIYL), 398-418 (ILIISFPAAFFIPISLFWFGW), and 424-444 (VHWIVPIVGTLFYASGSFLLF). An N-linked (GlcNAc...) asparagine glycan is attached at N486. The helical transmembrane segment at 496–516 (GWGSTILGVISCIMIPIPFLI) threads the bilayer.

The protein belongs to the major facilitator superfamily. CAR1 family.

It is found in the endoplasmic reticulum. It localises to the membrane. The sequence is that of Transporter mfs1 (mfs1) from Schizosaccharomyces pombe (strain 972 / ATCC 24843) (Fission yeast).